We begin with the raw amino-acid sequence, 427 residues long: Glutamate-1-semialdehyde 2,1-aminomutase (427 aa).

Lys-265 carries the N6-(pyridoxal phosphate)lysine modification.

The protein belongs to the class-III pyridoxal-phosphate-dependent aminotransferase family. HemL subfamily. In terms of assembly, homodimer. Requires pyridoxal 5'-phosphate as cofactor.

It is found in the cytoplasm. It catalyses the reaction (S)-4-amino-5-oxopentanoate = 5-aminolevulinate. It participates in porphyrin-containing compound metabolism; protoporphyrin-IX biosynthesis; 5-aminolevulinate from L-glutamyl-tRNA(Glu): step 2/2. The chain is Glutamate-1-semialdehyde 2,1-aminomutase from Neisseria meningitidis serogroup C (strain 053442).